Reading from the N-terminus, the 424-residue chain is MMTDPLSRSHAAALDAADPLRALRDAFVFPQHGGQDQTYFVGNSLGLQPRQARAMVSEVLDQWGALAVEGHFTGPTQWLTYHQLVRDGLARVVGAQPDEVVAMNTLTVNLHLMMASFYRPSAERAAILIEAGAFPSDRHAVESQLRLHGLDPDTHLIEVEPDAADGTLSMDAIAAAIAQHGPRLALVLWPGIQYRTGQAFALGEIARLARAQGAAVGFDLAHAVGNIPLSLHDDGVDFAVWCHYKYLNAGPGAVGGCFVHARHAHSNLPRMAGWWGHEQPTRFRMEPQFVPSPGAEGWQLSNPPVLALAPLRASLELFDQAGMPALRAKSEQLTGHLEQLIHTRVPQVLQIVTPADPAQRGCQLSLRVAGGRTQGRALFEYLQSVGVLGDWREPDVIRIAPVPLYNRFCDLHQLVEHVETWAAA.

Residues leucine 106, threonine 107, 134–137 (FPSD), aspartate 219, histidine 222, and tyrosine 244 each bind pyridoxal 5'-phosphate. Residue lysine 245 is modified to N6-(pyridoxal phosphate)lysine. 2 residues coordinate pyridoxal 5'-phosphate: tryptophan 274 and asparagine 302.

This sequence belongs to the kynureninase family. In terms of assembly, homodimer. The cofactor is pyridoxal 5'-phosphate.

It carries out the reaction L-kynurenine + H2O = anthranilate + L-alanine + H(+). The enzyme catalyses 3-hydroxy-L-kynurenine + H2O = 3-hydroxyanthranilate + L-alanine + H(+). It functions in the pathway amino-acid degradation; L-kynurenine degradation; L-alanine and anthranilate from L-kynurenine: step 1/1. It participates in cofactor biosynthesis; NAD(+) biosynthesis; quinolinate from L-kynurenine: step 2/3. In terms of biological role, catalyzes the cleavage of L-kynurenine (L-Kyn) and L-3-hydroxykynurenine (L-3OHKyn) into anthranilic acid (AA) and 3-hydroxyanthranilic acid (3-OHAA), respectively. This chain is Kynureninase, found in Xanthomonas campestris pv. campestris (strain B100).